The sequence spans 652 residues: Acetolactate synthase 3, chloroplastic (652 aa).

The segment covering M1–S20 has biased composition (polar residues). The tract at residues M1–P23 is disordered. The N-terminal 69 residues, M1–F69, are a transit peptide targeting the chloroplast. E126 contacts thiamine diphosphate. Residues R228, H334–R355, and D377–D396 each bind FAD. A thiamine pyrophosphate binding region spans residues Q469–H549. Positions 520 and 547 each coordinate Mg(2+).

This sequence belongs to the TPP enzyme family. The cofactor is Mg(2+). Thiamine diphosphate is required as a cofactor.

It is found in the plastid. The protein resides in the chloroplast. It carries out the reaction 2 pyruvate + H(+) = (2S)-2-acetolactate + CO2. It functions in the pathway amino-acid biosynthesis; L-isoleucine biosynthesis; L-isoleucine from 2-oxobutanoate: step 1/4. The protein operates within amino-acid biosynthesis; L-valine biosynthesis; L-valine from pyruvate: step 1/4. The sequence is that of Acetolactate synthase 3, chloroplastic from Brassica napus (Rape).